Consider the following 146-residue polypeptide: MLTNVEIQNIIPHKYPFLLIDKILEVEPGKRAVGIKNVTINEPFFQGHFPGNPIMPGVLIVEALAQTACVAGLMLEENKGKLGVFTGIESMKFRRQVVPGDTLRLEAEFLAFKLGMGKAKVVATVDGEVAAEGQIKFAMIDTNKKA.

His-48 is a catalytic residue.

It belongs to the thioester dehydratase family. FabZ subfamily.

Its subcellular location is the cytoplasm. It carries out the reaction a (3R)-hydroxyacyl-[ACP] = a (2E)-enoyl-[ACP] + H2O. Functionally, involved in unsaturated fatty acids biosynthesis. Catalyzes the dehydration of short chain beta-hydroxyacyl-ACPs and long chain saturated and unsaturated beta-hydroxyacyl-ACPs. The protein is 3-hydroxyacyl-[acyl-carrier-protein] dehydratase FabZ of Acetivibrio thermocellus (strain ATCC 27405 / DSM 1237 / JCM 9322 / NBRC 103400 / NCIMB 10682 / NRRL B-4536 / VPI 7372) (Clostridium thermocellum).